An 859-amino-acid chain; its full sequence is DNA mismatch repair protein MutS (859 aa).

612 to 619 (GPNMGGKS) contacts ATP. Positions 797–822 (SKPLAPSATPPSSYAAPSPAAAPAQA) are disordered.

Belongs to the DNA mismatch repair MutS family.

This protein is involved in the repair of mismatches in DNA. It is possible that it carries out the mismatch recognition step. This protein has a weak ATPase activity. This chain is DNA mismatch repair protein MutS, found in Alcanivorax borkumensis (strain ATCC 700651 / DSM 11573 / NCIMB 13689 / SK2).